A 135-amino-acid chain; its full sequence is Envelope glycoprotein N (135 aa).

The first 19 residues, 1-19, serve as a signal peptide directing secretion; sequence MEWNTLVLGLLVLSVVASS. Over 20-98 the chain is Virion surface; it reads NNTSTASTPR…SHMYELSLSS (79 aa). Positions 21 to 68 are enriched in low complexity; that stretch reads NTSTASTPRPSSSTHASTTVKATTVATTSTTTATSTSSTTSAKPGSTT. The segment at 21–73 is disordered; it reads NTSTASTPRPSSSTHASTTVKATTVATTSTTTATSTSSTTSAKPGSTTHDPNV. The chain crosses the membrane as a helical span at residues 99–119; it reads FAAWWTMLNALILMGAFCIVL. At 120–135 the chain is on the intravirion side; that stretch reads RHCCFQNFTATTTKGY.

This sequence belongs to the herpesviridae glycoprotein N family. As to quaternary structure, interacts (via N-terminus) with gM (via N-terminus). The gM-gN heterodimer forms the gCII complex. O-glycosylated.

Its subcellular location is the virion membrane. The protein resides in the host membrane. It is found in the host Golgi apparatus. The protein localises to the host trans-Golgi network. Functionally, envelope glycoprotein necessary for proper maturation of gM and modulation of its membrane fusion activity. Also plays a critical role in virion morphogenesis. This Homo sapiens (Human) protein is Envelope glycoprotein N.